We begin with the raw amino-acid sequence, 120 residues long: MGDEDLIELKFRLADGTDIGPSKYSQFMTVASLKEKIIAQWPKDKENAPKMINEVKLINGGKILENNKTLSEARSLITIGELPGIVTTMHVVLRPPLFEKKKEKLQNDPPRKSHCVCCIL.

In terms of domain architecture, Ubiquitin-like spans 7-72 (IELKFRLADG…ILENNKTLSE (66 aa)). Cysteine 115 is lipidated: S-palmitoyl cysteine. Cysteine 117 carries the cysteine methyl ester modification. The S-geranylgeranyl cysteine moiety is linked to residue cysteine 117. The propeptide at 118 to 120 (CIL) is removed in mature form.

As to expression, ubiquitous.

The protein resides in the cell membrane. Functionally, may serve as docking site to facilitate the association of other proteins to the plasma membrane. In Arabidopsis thaliana (Mouse-ear cress), this protein is Membrane-anchored ubiquitin-fold protein 5 (MUB5).